A 270-amino-acid chain; its full sequence is Putative carbamate hydrolase RutD (270 aa).

This sequence belongs to the AB hydrolase superfamily. Hydrolase RutD family.

It carries out the reaction carbamate + 2 H(+) = NH4(+) + CO2. Functionally, involved in pyrimidine catabolism. May facilitate the hydrolysis of carbamate, a reaction that can also occur spontaneously. This chain is Putative carbamate hydrolase RutD, found in Escherichia coli O44:H18 (strain 042 / EAEC).